The chain runs to 308 residues: Exosporium protein A (308 aa).

The protein localises to the spore wall. The chain is Exosporium protein A from Clostridium sporogenes (strain ATCC 15579).